Here is a 60-residue protein sequence, read N- to C-terminus: Large ribosomal subunit protein uL30 (60 aa).

Belongs to the universal ribosomal protein uL30 family. In terms of assembly, part of the 50S ribosomal subunit.

This is Large ribosomal subunit protein uL30 from Limosilactobacillus fermentum (strain NBRC 3956 / LMG 18251) (Lactobacillus fermentum).